The primary structure comprises 475 residues: Ribulose bisphosphate carboxylase large chain (475 aa).

The propeptide occupies 1 to 2; sequence MS. Pro-3 carries the N-acetylproline modification. Lys-14 bears the N6,N6,N6-trimethyllysine mark. Substrate contacts are provided by Asn-123 and Thr-173. Lys-175 (proton acceptor) is an active-site residue. Lys-177 contributes to the substrate binding site. The Mg(2+) site is built by Lys-201, Asp-203, and Glu-204. Residue Lys-201 is modified to N6-carboxylysine. Catalysis depends on His-294, which acts as the Proton acceptor. Positions 295, 327, and 379 each coordinate substrate.

The protein belongs to the RuBisCO large chain family. Type I subfamily. In terms of assembly, heterohexadecamer of 8 large chains and 8 small chains. It depends on Mg(2+) as a cofactor.

It localises to the plastid. It is found in the chloroplast. The catalysed reaction is 2 (2R)-3-phosphoglycerate + 2 H(+) = D-ribulose 1,5-bisphosphate + CO2 + H2O. It catalyses the reaction D-ribulose 1,5-bisphosphate + O2 = 2-phosphoglycolate + (2R)-3-phosphoglycerate + 2 H(+). Functionally, ruBisCO catalyzes two reactions: the carboxylation of D-ribulose 1,5-bisphosphate, the primary event in carbon dioxide fixation, as well as the oxidative fragmentation of the pentose substrate in the photorespiration process. Both reactions occur simultaneously and in competition at the same active site. In Coleochaete orbicularis (Charophycean green alga), this protein is Ribulose bisphosphate carboxylase large chain.